A 255-amino-acid polypeptide reads, in one-letter code: Pimeloyl-[acyl-carrier protein] methyl ester esterase (255 aa).

Positions 16-241 constitute an AB hydrolase-1 domain; it reads LVLVHGWGMN…QSSHAPFMTE (226 aa). Substrate-binding positions include Trp-22, 82-83, and 143-147; these read SL and FMALQ. Ser-82 functions as the Nucleophile in the catalytic mechanism. Catalysis depends on residues Asp-207 and His-235. A substrate-binding site is contributed by His-235.

It belongs to the AB hydrolase superfamily. Carboxylesterase BioH family. Monomer.

It localises to the cytoplasm. It carries out the reaction 6-carboxyhexanoyl-[ACP] methyl ester + H2O = 6-carboxyhexanoyl-[ACP] + methanol + H(+). The protein operates within cofactor biosynthesis; biotin biosynthesis. Functionally, the physiological role of BioH is to remove the methyl group introduced by BioC when the pimeloyl moiety is complete. It allows to synthesize pimeloyl-ACP via the fatty acid synthetic pathway through the hydrolysis of the ester bonds of pimeloyl-ACP esters. The chain is Pimeloyl-[acyl-carrier protein] methyl ester esterase from Vibrio cholerae serotype O1 (strain ATCC 39315 / El Tor Inaba N16961).